We begin with the raw amino-acid sequence, 299 residues long: Zinc import ATP-binding protein ZnuC (299 aa).

One can recognise an ABC transporter domain in the interval 13–228 (VSLANAGVQR…PEYMRLFGGT (216 aa)). 45–52 (GPNGSGKS) lines the ATP pocket.

This sequence belongs to the ABC transporter superfamily. Zinc importer (TC 3.A.1.15.5) family. In terms of assembly, the complex is composed of two ATP-binding proteins (ZnuC), two transmembrane proteins (ZnuB) and a solute-binding protein (ZnuA).

Its subcellular location is the cell inner membrane. The catalysed reaction is Zn(2+)(out) + ATP(in) + H2O(in) = Zn(2+)(in) + ADP(in) + phosphate(in) + H(+)(in). Its function is as follows. Part of the ABC transporter complex ZnuABC involved in zinc import. Responsible for energy coupling to the transport system. This is Zinc import ATP-binding protein ZnuC from Agrobacterium fabrum (strain C58 / ATCC 33970) (Agrobacterium tumefaciens (strain C58)).